The following is a 184-amino-acid chain: MKNLTDSFVYLGHWPSAGSFGFNTDILATNPINLSVVFGVLIFFGKGVLNDLLDNRKQRILNTIRNSEELREGAIQQLENARIRLRKVETEADQFRVNGYSEIEREKLNLINSTYRTLKQLENYKNETILFEQQRTINQVRERVFQQALQGAIGTLNSCLSNELHLRTINANIGMFGTMKEITD.

A helical membrane pass occupies residues Leu-27 to Leu-49.

It belongs to the ATPase B chain family. F-type ATPases have 2 components, F(1) - the catalytic core - and F(0) - the membrane proton channel. F(1) has five subunits: alpha(3), beta(3), gamma(1), delta(1), epsilon(1). F(0) has four main subunits: a(1), b(1), b'(1) and c(10-14). The alpha and beta chains form an alternating ring which encloses part of the gamma chain. F(1) is attached to F(0) by a central stalk formed by the gamma and epsilon chains, while a peripheral stalk is formed by the delta, b and b' chains.

Its subcellular location is the plastid. The protein localises to the chloroplast thylakoid membrane. Its function is as follows. F(1)F(0) ATP synthase produces ATP from ADP in the presence of a proton or sodium gradient. F-type ATPases consist of two structural domains, F(1) containing the extramembraneous catalytic core and F(0) containing the membrane proton channel, linked together by a central stalk and a peripheral stalk. During catalysis, ATP synthesis in the catalytic domain of F(1) is coupled via a rotary mechanism of the central stalk subunits to proton translocation. In terms of biological role, component of the F(0) channel, it forms part of the peripheral stalk, linking F(1) to F(0). This Arabis hirsuta (Hairy rock-cress) protein is ATP synthase subunit b, chloroplastic.